Consider the following 245-residue polypeptide: Transcriptional regulatory protein VxrB (245 aa).

Residues 31–142 (TLLLVEDDKN…ELFARIRAQL (112 aa)) enclose the Response regulatory domain. Residue Asp-78 is modified to 4-aspartylphosphate. Residues 151–245 (DSKVVTSNLT…LRGVGYKMKA (95 aa)) constitute a DNA-binding region (ompR/PhoB-type).

In terms of processing, phosphorylated by VxrA.

The protein localises to the cytoplasm. Its function is as follows. Member of the two-component regulatory system VxrB/VxrA involved in the regulation of diverses processes, including virulence, the type VI secretion system (T6SS) and biofilm formation. VxrB positively regulates the expression of the T6SS, a virulence nanomachine that directly translocates effectors into bacterial or host cells, thereby facilitating colonization by competing with sister cells and intestinal microbiota. In addition, it activates vpsL expression and biofilm formation, and represses motility. May regulate biofilm formation via its regulation of key biofilm regulators and cyclic di-GMP levels. Significantly contributes to both attack and defense via T6SS, while also influencing competition via regulation of biofilm matrix production. Is critical for colonization in the infant mouse model. The chain is Transcriptional regulatory protein VxrB from Vibrio cholerae serotype O1 (strain ATCC 39315 / El Tor Inaba N16961).